Reading from the N-terminus, the 238-residue chain is Uridylate kinase (238 aa).

12–15 (KLSG) serves as a coordination point for ATP. The interval 20-25 (GEKGFG) is involved in allosteric activation by GTP. Gly54 is a binding site for UMP. Residues Gly55 and Arg59 each contribute to the ATP site. UMP-binding positions include Asp72 and 133–140 (TGNPYFST). Tyr166 and Asp169 together coordinate ATP.

Belongs to the UMP kinase family. In terms of assembly, homohexamer.

The protein localises to the cytoplasm. It catalyses the reaction UMP + ATP = UDP + ADP. The protein operates within pyrimidine metabolism; CTP biosynthesis via de novo pathway; UDP from UMP (UMPK route): step 1/1. Allosterically activated by GTP. Inhibited by UTP. Its function is as follows. Catalyzes the reversible phosphorylation of UMP to UDP. The chain is Uridylate kinase from Clostridium botulinum (strain Hall / ATCC 3502 / NCTC 13319 / Type A).